The following is a 901-amino-acid chain: Glutamate receptor 2.1 (901 aa).

The N-terminal stretch at Met1–Ala25 is a signal peptide. The Extracellular segment spans residues Gln26–Thr574. N-linked (GlcNAc...) asparagine glycosylation is found at Asn46, Asn53, Asn204, Asn267, Asn331, Asn342, Asn461, Asn477, and Asn536. The chain crosses the membrane as a helical span at residues Leu575–Leu595. The Cytoplasmic portion of the chain corresponds to Glu596–Asp604. Residues Gly605–Ala625 traverse the membrane as a helical segment. Residues Pro626–Arg629 are Cytoplasmic-facing. The helical transmembrane segment at Val630–Thr650 threads the bilayer. At Gln651–Ser823 the chain is on the extracellular side. The helical transmembrane segment at Phe824 to Tyr844 threads the bilayer. Residues Gln845 to Asn901 lie on the Cytoplasmic side of the membrane.

It belongs to the glutamate-gated ion channel (TC 1.A.10.1) family. May form heteromers. Expressed predominantly in roots. First strongly detected in all cell types of the root except at the apex. Later expressed at the root-shoot junction.

Its subcellular location is the membrane. Functionally, glutamate-gated receptor that probably acts as a non-selective cation channel. May be involved in light-signal transduction and calcium homeostasis via the regulation of calcium influx into cells. The protein is Glutamate receptor 2.1 (GLR2.1) of Arabidopsis thaliana (Mouse-ear cress).